The primary structure comprises 2053 residues: Nonribosomal peptide synthetase pboA (2053 aa).

The interval 16 to 402 (ACRDNADRPA…GRRDRVAKVR (387 aa)) is adenylation 1. Residues 503–579 (RSYASVDEVI…HLITVCRERR (77 aa)) enclose the Carrier 1 domain. Position 540 is an O-(pantetheine 4'-phosphoryl)serine (serine 540). Positions 611-896 (NDPSLYCVKH…LLQSVHRTVQ (286 aa)) are condensation 1. The interval 1034–1418 (SAAARNPTNI…GRRDRQVKLR (385 aa)) is adenylation 2. The 79-residue stretch at 1515–1593 (VPDTSVKKII…DIVALVEGKI (79 aa)) folds into the Carrier 2 domain. Serine 1553 carries the O-(pantetheine 4'-phosphoryl)serine modification. Residues 1630-1981 (NSQCQSGFNV…LQLRLEYDSD (352 aa)) form a condensation 2 region.

It belongs to the NRP synthetase family. It depends on pantetheine 4'-phosphate as a cofactor.

It participates in secondary metabolite biosynthesis. Its function is as follows. Nonribosomal peptide synthetase; part of the gene cluster that mediates the biosynthesis of protubonine B, a hydroxylated and diacetylated cyclo-L-Trp-L-Leu derivative. The first step of the protubonine B synthesis is performed by the nonribosomal peptide synthetase pboA that catalyzes the formation of cyclo-L-Trp-L-Leu by condensing L-Leu with L-Trp. The flavin-dependent monooxygenase pboD is responsible for hydroxylation at C-3 of the indole ring and subsequent formation of the pyrrolidine ring, leadind to protubonine D. Protubonine D is further diacetylated by two acetyltransferases, pboB and pboC, to form the final product protubonine B via protubonine C. The polypeptide is Nonribosomal peptide synthetase pboA (Aspergillus ustus).